A 665-amino-acid polypeptide reads, in one-letter code: Methionine--tRNA ligase (665 aa).

A 'HIGH' region motif is present at residues 16-26; the sequence is YYPSGKAHIGH. The short motif at 311-315 is the 'KMSKS' region element; the sequence is KMSKS. Position 314 (K314) interacts with ATP. The tRNA-binding domain maps to 564–665; the sequence is DFDKIDLRVA…SALPNGAKVK (102 aa).

The protein belongs to the class-I aminoacyl-tRNA synthetase family. MetG type 2B subfamily. In terms of assembly, homodimer.

Its subcellular location is the cytoplasm. The enzyme catalyses tRNA(Met) + L-methionine + ATP = L-methionyl-tRNA(Met) + AMP + diphosphate. Its function is as follows. Is required not only for elongation of protein synthesis but also for the initiation of all mRNA translation through initiator tRNA(fMet) aminoacylation. This is Methionine--tRNA ligase from Listeria monocytogenes serotype 4b (strain F2365).